Here is a 344-residue protein sequence, read N- to C-terminus: Adenine deaminase (344 aa).

Zn(2+) contacts are provided by H24, H26, and H204. E207 serves as the catalytic Proton donor. D285 is a binding site for Zn(2+). Residue D286 coordinates substrate.

This sequence belongs to the metallo-dependent hydrolases superfamily. Adenosine and AMP deaminases family. Adenine deaminase type 2 subfamily. Zn(2+) serves as cofactor.

The enzyme catalyses adenine + H2O + H(+) = hypoxanthine + NH4(+). Catalyzes the hydrolytic deamination of adenine to hypoxanthine. Plays an important role in the purine salvage pathway and in nitrogen catabolism. The sequence is that of Adenine deaminase from Caulobacter vibrioides (strain ATCC 19089 / CIP 103742 / CB 15) (Caulobacter crescentus).